A 251-amino-acid chain; its full sequence is Early E1A protein (251 aa).

The segment at 38–46 (ISLHNLFDV) is interaction with RB1 in competition with E2F1. Residues 74–136 (SADSGAASGD…NYVNIAEGAS (63 aa)) are interaction with UBE2I. The short motif at 97 to 101 (LKCYE) is the LXCXE motif, interaction with host RB1 and TMEM173/STING element. Residues 102–122 (EGLPPSGSEADEAEERAEEEE) form a disordered region. Residues 110–122 (EADEAEERAEEEE) show a composition bias toward acidic residues. A zinc finger spans residues 150–170 (CRACDFHRGSSGNPEAMCALC). Residues 240 to 244 (PLNLS) carry the PXDLS motif, CTBP-binding motif. The Nuclear localization signal motif lies at 246-250 (KRPKS).

The protein belongs to the adenoviridae E1A protein family. Interacts with host UBE2I; this interaction interferes with polySUMOylation. Interacts with host RB1; this interaction induces the aberrant dissociation of RB1-E2F1 complex thereby disrupting the activity of RB1 and activating E2F1-regulated genes. Interacts with host ATF7; the interaction enhances ATF7-mediated viral transactivation activity which requires the zinc binding domains of both proteins. Isoform early E1A 32 kDa protein and isoform early E1A 26 kDa protein interact (via N-terminus) with CUL1 and E3 ubiquitin ligase RBX1; these interactions inhibit RBX1-CUL1-dependent elongation reaction of ubiquitin chains and attenuate ubiquitination of SCF(FBXW7) target proteins. Interacts (via PXLXP motif) with host ZMYND11/BS69 (via MYND-type zinc finger); this interaction inhibits E1A mediated transactivation. Interacts with host EP300; this interaction stimulates the acetylation of RB1 by recruiting EP300 and RB1 into a multimeric-protein complex. Interacts with host CTBP1 and CTBP2; this interaction seems to potentiate viral replication. Interacts with host DCAF7. Interacts with host DYRK1A. Interacts with host KPNA4; this interaction allows E1A import into the host nucleus. Interacts with host EP400; this interaction stabilizes MYC. Interacts with host TBP protein; this interaction probably disrupts the TBP-TATA complex. Interacts (via LXCXE motif) with host TMEM173/STING; this interaction impairs the ability of TMEM173/STING to sense cytosolic DNA and promote the production of type I interferon (IFN-alpha and IFN-beta). Interacts (via C-terminus) with host ZBED1/hDREF (via C-terminus); the interaction is direct.

The protein resides in the host nucleus. Functionally, plays a role in viral genome replication by driving entry of quiescent cells into the cell cycle. Stimulation of progression from G1 to S phase allows the virus to efficiently use the cellular DNA replicating machinery to achieve viral genome replication. E1A protein has both transforming and trans-activating activities. Induces the disassembly of the E2F1 transcription factor from RB1 by direct competition for the same binding site on RB1, with subsequent transcriptional activation of E2F1-regulated S-phase genes and of the E2 region of the adenoviral genome. Release of E2F1 leads to the ARF-mediated inhibition of MDM2 and causes TP53/p53 to accumulate because it is not targeted for degradation by MDM2-mediated ubiquitination anymore. This increase in TP53, in turn, would arrest the cell proliferation and direct its death but this effect is counteracted by the viral protein E1B-55K. Inactivation of the ability of RB1 to arrest the cell cycle is critical for cellular transformation, uncontrolled cellular growth and proliferation induced by viral infection. Interaction with RBX1 and CUL1 inhibits ubiquitination of the proteins targeted by SCF(FBXW7) ubiquitin ligase complex, and may be linked to unregulated host cell proliferation. The tumorigenesis-restraining activity of E1A may be related to the disruption of the host CtBP-CtIP complex through the CtBP binding motif. Interaction with host TMEM173/STING impairs the ability of TMEM173/STING to sense cytosolic DNA and promote the production of type I interferon (IFN-alpha and IFN-beta). Promotes the sumoylation of host ZBED1/hDREF with SUMO1. This Human adenovirus F serotype 41 (HAdV-41) protein is Early E1A protein.